Here is a 330-residue protein sequence, read N- to C-terminus: Protein IN CHLOROPLAST ATPASE BIOGENESIS, chloroplastic (330 aa).

A chloroplast-targeting transit peptide spans 1–35 (MGSISMHITPSTALPIRHFRARVSCCSSGHVSFIK).

As to quaternary structure, interacts with ATPC1.

Its subcellular location is the plastid. It is found in the chloroplast stroma. Its function is as follows. Involved in the assembly of the F(1) ATP synthase in chloroplast thylakoid membranes. Functions downstream of the CPN60 chaperones to promote assembly of the catalytically active core of the chloroplast ATP synthase. Assists the assembly of the ATP synthase gamma subunit into the active F(1) core downstream of CPN60-mediated folding, which is critical for the biogenesis of the chloroplast ATP synthase. This Arabidopsis thaliana (Mouse-ear cress) protein is Protein IN CHLOROPLAST ATPASE BIOGENESIS, chloroplastic.